Consider the following 298-residue polypeptide: uncharacterized protein (298 aa).

8 helical membrane-spanning segments follow: residues 5–25 (SLAT…FLLW), 52–72 (VISG…FLAL), 105–125 (LFLL…QVLV), 138–158 (IFWG…LLML), 163–183 (IQGG…NDIA), 208–228 (GLMG…PLLT), 236–256 (LLAG…MSAI), and 273–293 (GGLL…FYFI).

The protein belongs to the CDS family.

The protein localises to the cell membrane. This is an uncharacterized protein from Escherichia coli (strain K12).